The following is a 122-amino-acid chain: Cofilin-5 (122 aa).

The 120-residue stretch at 3-122 (SRIIEIDPNC…VKDLIQLSNL (120 aa)) folds into the ADF-H domain.

Belongs to the actin-binding proteins ADF family.

It localises to the cytoplasm. The protein resides in the cytoskeleton. In terms of biological role, controls actin polymerization and depolymerization. The sequence is that of Cofilin-5 (cofF) from Dictyostelium discoideum (Social amoeba).